A 71-amino-acid chain; its full sequence is Large ribosomal subunit protein bL31 (71 aa).

Residues Cys-16, Cys-18, Cys-37, and Cys-40 each coordinate Zn(2+).

It belongs to the bacterial ribosomal protein bL31 family. Type A subfamily. In terms of assembly, part of the 50S ribosomal subunit. The cofactor is Zn(2+).

Binds the 23S rRNA. The chain is Large ribosomal subunit protein bL31 from Chromohalobacter salexigens (strain ATCC BAA-138 / DSM 3043 / CIP 106854 / NCIMB 13768 / 1H11).